We begin with the raw amino-acid sequence, 236 residues long: Phosphatidylserine decarboxylase proenzyme (236 aa).

Catalysis depends on Ser-194, which acts as the Schiff-base intermediate with substrate; via pyruvic acid. At Ser-194 the chain carries Pyruvic acid (Ser); by autocatalysis.

The protein belongs to the phosphatidylserine decarboxylase family. PSD-A subfamily. As to quaternary structure, heterodimer of a large membrane-associated beta subunit and a small pyruvoyl-containing alpha subunit. Pyruvate serves as cofactor. In terms of processing, is synthesized initially as an inactive proenzyme. Formation of the active enzyme involves a self-maturation process in which the active site pyruvoyl group is generated from an internal serine residue via an autocatalytic post-translational modification. Two non-identical subunits are generated from the proenzyme in this reaction, and the pyruvate is formed at the N-terminus of the alpha chain, which is derived from the carboxyl end of the proenzyme. The post-translation cleavage follows an unusual pathway, termed non-hydrolytic serinolysis, in which the side chain hydroxyl group of the serine supplies its oxygen atom to form the C-terminus of the beta chain, while the remainder of the serine residue undergoes an oxidative deamination to produce ammonia and the pyruvoyl prosthetic group on the alpha chain.

It localises to the cell membrane. The catalysed reaction is a 1,2-diacyl-sn-glycero-3-phospho-L-serine + H(+) = a 1,2-diacyl-sn-glycero-3-phosphoethanolamine + CO2. Its pathway is phospholipid metabolism; phosphatidylethanolamine biosynthesis; phosphatidylethanolamine from CDP-diacylglycerol: step 2/2. Catalyzes the formation of phosphatidylethanolamine (PtdEtn) from phosphatidylserine (PtdSer). The polypeptide is Phosphatidylserine decarboxylase proenzyme (Rhodospirillum rubrum (strain ATCC 11170 / ATH 1.1.1 / DSM 467 / LMG 4362 / NCIMB 8255 / S1)).